A 273-amino-acid polypeptide reads, in one-letter code: 2,3,4,5-tetrahydropyridine-2,6-dicarboxylate N-succinyltransferase (273 aa).

It belongs to the transferase hexapeptide repeat family.

Its subcellular location is the cytoplasm. The enzyme catalyses (S)-2,3,4,5-tetrahydrodipicolinate + succinyl-CoA + H2O = (S)-2-succinylamino-6-oxoheptanedioate + CoA. Its pathway is amino-acid biosynthesis; L-lysine biosynthesis via DAP pathway; LL-2,6-diaminopimelate from (S)-tetrahydrodipicolinate (succinylase route): step 1/3. This is 2,3,4,5-tetrahydropyridine-2,6-dicarboxylate N-succinyltransferase from Acinetobacter baumannii (strain AB307-0294).